The sequence spans 198 residues: Large ribosomal subunit protein bL9 (198 aa).

This sequence belongs to the bacterial ribosomal protein bL9 family.

Binds to the 23S rRNA. In Bartonella tribocorum (strain CIP 105476 / IBS 506), this protein is Large ribosomal subunit protein bL9.